The sequence spans 334 residues: Probable prephenate dehydratase (334 aa).

Residues 7 to 224 (RVLFLGPKGT…NTTRFLVLKR (218 aa)) form the Prephenate dehydratase domain. In terms of domain architecture, ACT spans 244-322 (LTFTTRQDDP…SDKSKQWCLW (79 aa)).

It localises to the cytoplasm. The enzyme catalyses prephenate + H(+) = 3-phenylpyruvate + CO2 + H2O. The protein operates within amino-acid biosynthesis; L-phenylalanine biosynthesis; phenylpyruvate from prephenate: step 1/1. In terms of biological role, catayzes the decarboxylation/dehydration of prephenate to phenylpyruvate. This is Probable prephenate dehydratase (PHA2) from Saccharomyces cerevisiae (strain ATCC 204508 / S288c) (Baker's yeast).